The following is a 395-amino-acid chain: Elongation factor Tu (395 aa).

A tr-type G domain is found at Lys-10–Glu-204. The segment at Gly-19–Thr-26 is G1. Gly-19–Thr-26 lines the GTP pocket. Residue Thr-26 coordinates Mg(2+). Residues Gly-60–Asn-64 are G2. Positions Asp-81–Gly-84 are G3. GTP is bound by residues Asp-81–His-85 and Asn-136–Asp-139. Residues Asn-136–Asp-139 are G4. The segment at Ser-174–Leu-176 is G5.

This sequence belongs to the TRAFAC class translation factor GTPase superfamily. Classic translation factor GTPase family. EF-Tu/EF-1A subfamily. As to quaternary structure, monomer.

The protein resides in the cytoplasm. The catalysed reaction is GTP + H2O = GDP + phosphate + H(+). GTP hydrolase that promotes the GTP-dependent binding of aminoacyl-tRNA to the A-site of ribosomes during protein biosynthesis. The polypeptide is Elongation factor Tu (Enterococcus faecalis (strain ATCC 700802 / V583)).